The sequence spans 251 residues: Hydroxyacylglutathione hydrolase (251 aa).

Positions 53, 55, 57, 58, 109, 126, and 164 each coordinate Zn(2+).

The protein belongs to the metallo-beta-lactamase superfamily. Glyoxalase II family. In terms of assembly, monomer. Zn(2+) serves as cofactor.

It carries out the reaction an S-(2-hydroxyacyl)glutathione + H2O = a 2-hydroxy carboxylate + glutathione + H(+). It functions in the pathway secondary metabolite metabolism; methylglyoxal degradation; (R)-lactate from methylglyoxal: step 2/2. Thiolesterase that catalyzes the hydrolysis of S-D-lactoyl-glutathione to form glutathione and D-lactic acid. In Wigglesworthia glossinidia brevipalpis, this protein is Hydroxyacylglutathione hydrolase.